Here is a 414-residue protein sequence, read N- to C-terminus: Gamma-glutamyl phosphate reductase (414 aa).

It belongs to the gamma-glutamyl phosphate reductase family.

Its subcellular location is the cytoplasm. It catalyses the reaction L-glutamate 5-semialdehyde + phosphate + NADP(+) = L-glutamyl 5-phosphate + NADPH + H(+). It functions in the pathway amino-acid biosynthesis; L-proline biosynthesis; L-glutamate 5-semialdehyde from L-glutamate: step 2/2. In terms of biological role, catalyzes the NADPH-dependent reduction of L-glutamate 5-phosphate into L-glutamate 5-semialdehyde and phosphate. The product spontaneously undergoes cyclization to form 1-pyrroline-5-carboxylate. The protein is Gamma-glutamyl phosphate reductase of Kosmotoga olearia (strain ATCC BAA-1733 / DSM 21960 / TBF 19.5.1).